The sequence spans 211 residues: Large ribosomal subunit protein uL3 (211 aa).

This sequence belongs to the universal ribosomal protein uL3 family. Part of the 50S ribosomal subunit. Forms a cluster with proteins L14 and L19.

One of the primary rRNA binding proteins, it binds directly near the 3'-end of the 23S rRNA, where it nucleates assembly of the 50S subunit. The chain is Large ribosomal subunit protein uL3 from Geotalea daltonii (strain DSM 22248 / JCM 15807 / FRC-32) (Geobacter daltonii).